The following is a 383-amino-acid chain: UDP-N-acetylenolpyruvoylglucosamine reductase (383 aa).

An FAD-binding PCMH-type domain is found at 42-212; that stretch reads LSCQAMQLIT…TRVGFKLHKD (171 aa). Arg-189 is an active-site residue. Ser-267 functions as the Proton donor in the catalytic mechanism. The active site involves Glu-369.

Belongs to the MurB family. It depends on FAD as a cofactor.

It is found in the cytoplasm. It carries out the reaction UDP-N-acetyl-alpha-D-muramate + NADP(+) = UDP-N-acetyl-3-O-(1-carboxyvinyl)-alpha-D-glucosamine + NADPH + H(+). Its pathway is cell wall biogenesis; peptidoglycan biosynthesis. Its function is as follows. Cell wall formation. This is UDP-N-acetylenolpyruvoylglucosamine reductase from Psychrobacter sp. (strain PRwf-1).